Here is a 406-residue protein sequence, read N- to C-terminus: MNKPVAPNSYKTGPDEEGMFGIFGGRFVAETLMPLILELQQAYETARNDPEFKAELNALSTFYAGRPSKLYYAEGLSKHLGGAKIYFKREDLNHTGSHKINNCLGQILLAKRMGKTRIIAETGAGQHGVASATVAARFGLPCIVYVGATDVERQKPNVFRMKLLGAEVKPVSAGNGTLKDAMNEALRDWVTNVEDTYYLIGTAAGPHPYPELVRDFQSVIGTEARQQILEQEGRLPDVIVAAVGGGSNAIGLFHPFLDDASVKIVGVEAGGRGLEGEEHCASMSAGRPGVLHGNRTYLLQNADGQILEGHSVSAGLDYPGVGPEHSWLKDSGRVDYVPILDNEALDAFQLCTRTEGIIPALESAHAIAQAVKMAPTMGKDKVMIVNLSGRGDKDVHTVGKLLGMDI.

Lys-99 is subject to N6-(pyridoxal phosphate)lysine.

Belongs to the TrpB family. In terms of assembly, tetramer of two alpha and two beta chains. It depends on pyridoxal 5'-phosphate as a cofactor.

The catalysed reaction is (1S,2R)-1-C-(indol-3-yl)glycerol 3-phosphate + L-serine = D-glyceraldehyde 3-phosphate + L-tryptophan + H2O. Its pathway is amino-acid biosynthesis; L-tryptophan biosynthesis; L-tryptophan from chorismate: step 5/5. Its function is as follows. The beta subunit is responsible for the synthesis of L-tryptophan from indole and L-serine. The chain is Tryptophan synthase beta chain from Brucella abortus (strain 2308).